We begin with the raw amino-acid sequence, 267 residues long: Staphylococcal secretory antigen ssaA2 (267 aa).

The N-terminal stretch at 1 to 27 is a signal peptide; the sequence is MKKIATATIATAGFATIAIASGNQAHA. 7 repeat units span residues 83–85, 86–88, 89–91, 95–97, 101–103, 104–106, and 113–115. The interval 83 to 115 is 7 X 3 AA repeats of Y-[NS]-N; it reads YNNYNNYNNGYSYNNYSRYNNYSNNNQSYNYNN. A Peptidase C51 domain is found at 146–267; sequence MAPSSNGRSI…SQAAGYNFIH (122 aa).

The protein resides in the secreted. Its function is as follows. Not known; immunogenic protein. This Staphylococcus aureus (strain NCTC 8325 / PS 47) protein is Staphylococcal secretory antigen ssaA2 (ssaA2).